We begin with the raw amino-acid sequence, 1177 residues long: uncharacterized protein (1177 aa).

A signal peptide spans 1 to 26 (MKKLLKKSKFWWFLLCGLSVSTILVA). A lipid anchor (N-palmitoyl cysteine) is attached at Cys-27. Cys-27 carries the S-diacylglycerol cysteine lipid modification.

Belongs to the MG307/MG309/MG338 family.

The protein resides in the cell membrane. This is an uncharacterized protein from Mycoplasma genitalium (strain ATCC 33530 / DSM 19775 / NCTC 10195 / G37) (Mycoplasmoides genitalium).